The following is a 301-amino-acid chain: G-protein coupled receptor homolog U51 (301 aa).

Topologically, residues 1–15 (MEKETKSLAWPATAE) are extracellular. The helical transmembrane segment at 16-36 (FYGWVFIFSSIQLCTMVLLTV) threads the bilayer. Residues 37–48 (RFNSFKVGREYA) are Cytoplasmic-facing. Residues 49–69 (VFTFAGMSFNCFLLPIKMGLL) form a helical membrane-spanning segment. At 70–82 (SGHWSLPRDFCAI) the chain is on the extracellular side. A helical transmembrane segment spans residues 83 to 103 (LLYIDDFSIYFSSWSLVFMAI). The Cytoplasmic portion of the chain corresponds to 104-122 (ERINHFCYSTPLLNENSKA). A helical transmembrane segment spans residues 123–143 (LAKVCFPIVWIISGVQALQML). Over 144–168 (NNYKATALQNETPQCFLAFLRSGYD) the chain is Extracellular. The helical transmembrane segment at 169–189 (MWLMLVYSVMIPVMLVFIYIY) threads the bilayer. Topologically, residues 190–199 (SKNFMLLKDE) are cytoplasmic. Residues 200-220 (LSTVTTYLCIYLLLGTIAHLP) traverse the membrane as a helical segment. Over 221-238 (KAGLSEIESDKIFYGLRD) the chain is Extracellular. A helical transmembrane segment spans residues 239-259 (IFMALPVLKVYYIPVMAYCMA). Over 260–301 (CDDHTVPVRLCSIWLVNLCKKCFSCTRREKESDLEVGIKMLK) the chain is Cytoplasmic.

Belongs to the G-protein coupled receptor 1 family.

Its subcellular location is the host cell membrane. In Homo sapiens (Human), this protein is G-protein coupled receptor homolog U51 (U51).